Consider the following 237-residue polypeptide: Putative exosome complex component rrp40 (237 aa).

In terms of domain architecture, S1 motif spans 67–137; it reads EDMVIGTIIE…EPEVVCLSQK (71 aa).

The protein belongs to the RRP40 family. Component of the RNA exosome complex.

It localises to the cytoplasm. The protein localises to the nucleus. Its subcellular location is the nucleolus. Functionally, non-catalytic component of the RNA exosome complex which has 3'-&gt;5' exoribonuclease activity and participates in a multitude of cellular RNA processing and degradation events. The polypeptide is Putative exosome complex component rrp40 (exosc3) (Dictyostelium discoideum (Social amoeba)).